Here is a 702-residue protein sequence, read N- to C-terminus: Ribosomal RNA large subunit methyltransferase K/L (702 aa).

A THUMP domain is found at leucine 43–leucine 154.

The protein belongs to the methyltransferase superfamily. RlmKL family.

The protein resides in the cytoplasm. The enzyme catalyses guanosine(2445) in 23S rRNA + S-adenosyl-L-methionine = N(2)-methylguanosine(2445) in 23S rRNA + S-adenosyl-L-homocysteine + H(+). The catalysed reaction is guanosine(2069) in 23S rRNA + S-adenosyl-L-methionine = N(2)-methylguanosine(2069) in 23S rRNA + S-adenosyl-L-homocysteine + H(+). Specifically methylates the guanine in position 2445 (m2G2445) and the guanine in position 2069 (m7G2069) of 23S rRNA. This Salmonella arizonae (strain ATCC BAA-731 / CDC346-86 / RSK2980) protein is Ribosomal RNA large subunit methyltransferase K/L.